Consider the following 265-residue polypeptide: Thymidine kinase 2, mitochondrial (265 aa).

Residues Met1 to Arg33 constitute a mitochondrion transit peptide. Positions Ser21–Ser31 are enriched in low complexity. Positions Ser21–Arg45 are disordered. Position 57–65 (Gly57–Thr65) interacts with ATP. The active-site Proton acceptor is the Glu133.

It belongs to the DCK/DGK family. In terms of assembly, homodimer.

Its subcellular location is the mitochondrion. It carries out the reaction thymidine + ATP = dTMP + ADP + H(+). It catalyses the reaction 2'-deoxycytidine + ATP = dCMP + ADP + H(+). The catalysed reaction is 2'-deoxyuridine + ATP = dUMP + ADP + H(+). Phosphorylates thymidine, deoxycytidine, and deoxyuridine in the mitochondrial matrix. In non-replicating cells, where cytosolic dNTP synthesis is down-regulated, mtDNA synthesis depends solely on TK2 and DGUOK. The protein is Thymidine kinase 2, mitochondrial (TK2) of Macaca fascicularis (Crab-eating macaque).